Reading from the N-terminus, the 200-residue chain is dTTP/UTP pyrophosphatase (200 aa).

Asp-76 (proton acceptor) is an active-site residue.

The protein belongs to the Maf family. YhdE subfamily. A divalent metal cation is required as a cofactor.

It localises to the cytoplasm. It catalyses the reaction dTTP + H2O = dTMP + diphosphate + H(+). The catalysed reaction is UTP + H2O = UMP + diphosphate + H(+). In terms of biological role, nucleoside triphosphate pyrophosphatase that hydrolyzes dTTP and UTP. May have a dual role in cell division arrest and in preventing the incorporation of modified nucleotides into cellular nucleic acids. The polypeptide is dTTP/UTP pyrophosphatase (Acetivibrio thermocellus (strain ATCC 27405 / DSM 1237 / JCM 9322 / NBRC 103400 / NCIMB 10682 / NRRL B-4536 / VPI 7372) (Clostridium thermocellum)).